The sequence spans 283 residues: Nucleoid occlusion protein (283 aa).

A disordered region spans residues Met-1–Ala-21. Residues Glu-148–Leu-167 constitute a DNA-binding region (H-T-H motif).

It belongs to the ParB family.

Its subcellular location is the cytoplasm. It localises to the nucleoid. Its function is as follows. Effects nucleoid occlusion by binding relatively nonspecifically to DNA and preventing the assembly of the division machinery in the vicinity of the nucleoid, especially under conditions that disturb the cell cycle. It helps to coordinate cell division and chromosome segregation by preventing the formation of the Z ring through the nucleoid, which would cause chromosome breakage. In Bacillus velezensis (strain DSM 23117 / BGSC 10A6 / LMG 26770 / FZB42) (Bacillus amyloliquefaciens subsp. plantarum), this protein is Nucleoid occlusion protein.